A 177-amino-acid polypeptide reads, in one-letter code: Large ribosomal subunit protein uL6 (177 aa).

It belongs to the universal ribosomal protein uL6 family. As to quaternary structure, part of the 50S ribosomal subunit.

This protein binds to the 23S rRNA, and is important in its secondary structure. It is located near the subunit interface in the base of the L7/L12 stalk, and near the tRNA binding site of the peptidyltransferase center. The protein is Large ribosomal subunit protein uL6 of Erwinia tasmaniensis (strain DSM 17950 / CFBP 7177 / CIP 109463 / NCPPB 4357 / Et1/99).